A 252-amino-acid chain; its full sequence is Ubiquinone biosynthesis O-methyltransferase (252 aa).

R45, G76, D97, and M141 together coordinate S-adenosyl-L-methionine.

It belongs to the methyltransferase superfamily. UbiG/COQ3 family.

It catalyses the reaction a 3-demethylubiquinol + S-adenosyl-L-methionine = a ubiquinol + S-adenosyl-L-homocysteine + H(+). It carries out the reaction a 3-(all-trans-polyprenyl)benzene-1,2-diol + S-adenosyl-L-methionine = a 2-methoxy-6-(all-trans-polyprenyl)phenol + S-adenosyl-L-homocysteine + H(+). Its pathway is cofactor biosynthesis; ubiquinone biosynthesis. Its function is as follows. O-methyltransferase that catalyzes the 2 O-methylation steps in the ubiquinone biosynthetic pathway. This Caulobacter vibrioides (strain ATCC 19089 / CIP 103742 / CB 15) (Caulobacter crescentus) protein is Ubiquinone biosynthesis O-methyltransferase.